We begin with the raw amino-acid sequence, 292 residues long: MSPTDMKAVVFYGPHSIAIESRPIPKVQHDKDIVVKVSASGLCGSDLHYFRGHEVVDSAGFIMGHEFVGEVVEAGRAVTTVRPGDKVVSPFTVSCGDCFYCKLQNSSRCVHCQVFGSNGLDGAQAEYVRVPLADSTVVRAPPGLSDDALILMADIFPTGFFGARNAMAGLGAQDPTEAVVVVIGCGPVGLCAIVSALEYRPRVVFAIDSVDSRLGLAEKLGARPLDLKKGVPSIISAVQEVTEGRGADAVVEVVGQGPALRTAYDIIRPFGSISSIGAHHSAMPFSATDGYE.

C43 is a binding site for Zn(2+). Y49 contributes to the substrate binding site. Zn(2+)-binding residues include H65 and E66. NAD(+) contacts are provided by residues 184 to 189 (GCGPVG), D208, R213, and 276 to 278 (IGA).

Belongs to the zinc-containing alcohol dehydrogenase family. Requires Zn(2+) as cofactor.

It participates in mycotoxin biosynthesis. Its function is as follows. Medium chain reductase/dehydrogenase; part of the gene cluster that mediates the biosynthesis of UCS1025A, a member of the pyrrolizidinone family that acts as a strong telomerase inhibitor and displays potent antibacterial and antitumor properties. These compounds share a hemiaminal-containing pyrrolizidinone core fused with a gamma-lactone, giving a furopyrrolizidine that is connected to a decalin fragment. The polyketide synthase module (PKS) of the PKS-NRPS ucsA is responsible for the synthesis of the polyketide backbone via the condensation of an acetyl-CoA starter unit with 6 malonyl-CoA units. The downstream nonribosomal peptide synthetase (NRPS) module then amidates the carboxyl end of the polyketide with a 2S,3S-methylproline derived from L-isoleucine by the 2-oxoglutarate-dependent dioxygenase ucsF which converts L-isoleucine to (4S,5S)-4-methylpyrroline-5-carboxylate that is further converted to 2S,3S-methylproline by the pyrroline-5-carboxylate reductase ucsG. Reductive release of the completed aminoacyl polyketide from the assembly line can form the 3-pyrrolin-2-one structure via an intramolecular Knoevenagel reaction. Because ucsA lacks a designated enoylreductase (ER) domain, the required activity is provided the enoyl reductase ucsL. This keto acyclic precursor is the substrate of the Diels-Alderase ucsH, that catalyzes the Diels-Alder cycloaddition. Oxidation of the 3S-methyl group to a carboxylate by the cytochrome P450 monooxygenase ucsK allows an oxa-Michael cyclization that might involve the reductase/dehydrogenase ucsI and which furnishes the furopyrrolizidine. The oxidase ucsJ likely plays a critical role in stereoselective reduction of the C5-C6 double bond to afford the required R-configured carboxylate group. Further enolization and oxidation at C5 by an unidentified enzyme affords the last intermediate that can undergo oxa-Michael cyclization to yield UCS1025A. In Acremonium sp, this protein is Medium chain reductase/dehydrogenase ucsI.